Consider the following 201-residue polypeptide: Probable nicotinate-nucleotide adenylyltransferase (201 aa).

It belongs to the NadD family.

It catalyses the reaction nicotinate beta-D-ribonucleotide + ATP + H(+) = deamido-NAD(+) + diphosphate. It functions in the pathway cofactor biosynthesis; NAD(+) biosynthesis; deamido-NAD(+) from nicotinate D-ribonucleotide: step 1/1. Its function is as follows. Catalyzes the reversible adenylation of nicotinate mononucleotide (NaMN) to nicotinic acid adenine dinucleotide (NaAD). This Clostridium botulinum (strain Loch Maree / Type A3) protein is Probable nicotinate-nucleotide adenylyltransferase.